Reading from the N-terminus, the 359-residue chain is uncharacterized protein (359 aa).

The 267-residue stretch at 43–309 (YHLIRKLGSG…VLDFLGDDWG (267 aa)) folds into the Protein kinase domain. Residues 49–57 (LGSGSYGRV) and lysine 72 each bind ATP. Aspartate 163 (proton acceptor) is an active-site residue. A disordered region spans residues 314–359 (REGPGVLGSAVSYEDREEGGSSLEEWTDEGDDSKSGGRTGTDGGAP). The segment covering 350 to 359 (GRTGTDGGAP) has biased composition (gly residues).

It belongs to the protein kinase superfamily. Ser/Thr protein kinase family. STKL subfamily.

It carries out the reaction L-seryl-[protein] + ATP = O-phospho-L-seryl-[protein] + ADP + H(+). The catalysed reaction is L-threonyl-[protein] + ATP = O-phospho-L-threonyl-[protein] + ADP + H(+). This is an uncharacterized protein from Homo sapiens (Human).